Consider the following 113-residue polypeptide: Gas vesicle protein I2 (113 aa).

Residues 1-93 (MTPTNRHTHG…TVPEQPTHAT (93 aa)) form a disordered region. The span at 11–22 (QNAQHARRNAQQ) shows a compositional bias: low complexity. Polar residues predominate over residues 52 to 63 (EQPTSDTTNPAA). Over residues 69-81 (AQRTNAQNAARNA) the composition is skewed to low complexity. The segment covering 82 to 93 (HSTVPEQPTHAT) has biased composition (polar residues).

It belongs to the gas vesicle GvpI family. As to quaternary structure, gvpF to GvpM interact with each other in vitro, and may form multi-subunit complex(es). Interacts with GvpC and GvpO.

The protein resides in the gas vesicle. Functionally, proteins GvpF to GvpM might be involved in nucleating gas vesicle formation. A minor component of the gas vesicle. Gas vesicles are hollow, gas filled proteinaceous nanostructures found in several microbial planktonic microorganisms. They allow positioning of halobacteria at the optimal depth for growth in the poorly aerated, shallow brine pools of their habitat. Expression of 2 c-vac DNA fragments containing 2 divergently transcribed regions (gvpE-gvpF-gvpG-gvpH-gvpI-gvpJ-gvpK-gvpL-gvpM and gvpA-gvpC-gvpN-gvpO) allows H.volcanii to produce gas vesicles. This Halobacterium salinarum (strain ATCC 700922 / JCM 11081 / NRC-1) (Halobacterium halobium) protein is Gas vesicle protein I2.